The chain runs to 142 residues: HTH-type transcriptional regulator MntR (142 aa).

Residues 1–63 (MPTPSMEDYI…YEKYRGLVLT (63 aa)) form the HTH dtxR-type domain. Residues D8, E11, H77, E99, E102, and H103 each contribute to the Mn(2+) site.

Belongs to the DtxR/MntR family. Homodimer.

Its subcellular location is the cytoplasm. Its activity is regulated as follows. DNA binding is strongly activated by Mn(2+). Central regulator of manganese homeostasis. This chain is HTH-type transcriptional regulator MntR, found in Bacillus cereus (strain ATCC 14579 / DSM 31 / CCUG 7414 / JCM 2152 / NBRC 15305 / NCIMB 9373 / NCTC 2599 / NRRL B-3711).